The sequence spans 429 residues: Adenylosuccinate synthetase (429 aa).

Residues 12 to 18 (GDEGKGK) and 40 to 42 (GHT) contribute to the GTP site. The active-site Proton acceptor is D13. Residues D13 and G40 each contribute to the Mg(2+) site. Residues 13–16 (DEGK), 38–41 (NAGH), T128, R142, Q223, T238, and R302 each bind IMP. Catalysis depends on H41, which acts as the Proton donor. Position 298–304 (298–304 (TVTGRPR)) interacts with substrate. GTP is bound by residues R304, 330–332 (LLD), and 412–414 (SVG).

It belongs to the adenylosuccinate synthetase family. In terms of assembly, homodimer. The cofactor is Mg(2+).

It localises to the cytoplasm. It carries out the reaction IMP + L-aspartate + GTP = N(6)-(1,2-dicarboxyethyl)-AMP + GDP + phosphate + 2 H(+). It functions in the pathway purine metabolism; AMP biosynthesis via de novo pathway; AMP from IMP: step 1/2. Its function is as follows. Plays an important role in the de novo pathway of purine nucleotide biosynthesis. Catalyzes the first committed step in the biosynthesis of AMP from IMP. The sequence is that of Adenylosuccinate synthetase from Lactobacillus johnsonii (strain CNCM I-12250 / La1 / NCC 533).